The following is a 160-amino-acid chain: Lymphocyte antigen 86 (160 aa).

The signal sequence occupies residues 1-20 (MKTLNVLALVLVLLCINAST). Disulfide bonds link C28/C53, C40/C149, and C97/C107.

As to quaternary structure, M-shaped tetramer of two CD180-LY86 heterodimers. In terms of tissue distribution, detected in the macrophage-like 10.4 cells.

The protein resides in the secreted. It is found in the extracellular space. Functionally, may cooperate with CD180 and TLR4 to mediate the innate immune response to bacterial lipopolysaccharide (LPS) and cytokine production. Important for efficient CD180 cell surface expression. The protein is Lymphocyte antigen 86 (LY86) of Gallus gallus (Chicken).